A 438-amino-acid polypeptide reads, in one-letter code: 23S rRNA (uracil(1939)-C(5))-methyltransferase RlmD (438 aa).

Residues 10 to 68 (KTKNVQTITADILDLDYQGLGVAKINGKTWFIENALPHEKVECRILEDKRQYGHAIVKK) form the TRAM domain. [4Fe-4S] cluster contacts are provided by Cys81, Cys87, Cys90, and Cys168. 6 residues coordinate S-adenosyl-L-methionine: Gln271, Phe300, Asn305, Glu321, Asp348, and Asp369. Cys395 (nucleophile) is an active-site residue.

This sequence belongs to the class I-like SAM-binding methyltransferase superfamily. RNA M5U methyltransferase family. RlmD subfamily.

It carries out the reaction uridine(1939) in 23S rRNA + S-adenosyl-L-methionine = 5-methyluridine(1939) in 23S rRNA + S-adenosyl-L-homocysteine + H(+). In terms of biological role, catalyzes the formation of 5-methyl-uridine at position 1939 (m5U1939) in 23S rRNA. The chain is 23S rRNA (uracil(1939)-C(5))-methyltransferase RlmD from Haemophilus influenzae (strain ATCC 51907 / DSM 11121 / KW20 / Rd).